Reading from the N-terminus, the 974-residue chain is Hexokinase-1 (974 aa).

The interval 1–42 is disordered; the sequence is MGWGAPLLSRMLHGPGQAGETSPVPERQSGSENPASEDRRPL. The interval 57–66 is mitochondrial-binding peptide (MBP); it reads CQRGQAVDVE. Hexokinase domains lie at 72–514 and 520–962; these read PLTE…MVTA and AEQH…LITA. ATP contacts are provided by residues R86 and 140–145; that span reads DLGGSS. The tract at residues 129-263 is hexokinase small subdomain 1; it reads DGSEKGDFIA…DYDANIVAVV (135 aa). A D-glucose 6-phosphate-binding site is contributed by 140–147; sequence DLGGSSFR. D-glucose contacts are provided by residues S211, 228 to 229, and 264 to 265; these read TK and ND. The hexokinase large subdomain 1 stretch occupies residues 264-503; that stretch reads NDTVGTMMTC…SDVRFLLSES (240 aa). D-glucose 6-phosphate is bound by residues D265 and T288. D-glucose is bound by residues N291, E316, and 347–350; that span reads QLFE. The residue at position 393 (S393) is a Phosphoserine. 469–471 serves as a coordination point for D-glucose 6-phosphate; it reads DGS. Residue 481–482 participates in ATP binding; the sequence is RR. D-glucose 6-phosphate contacts are provided by residues S505 and 588 to 592; that span reads DLGGT. The hexokinase small subdomain 2 stretch occupies residues 577–711; that stretch reads DGTEHGDFLA…EFDLDVVAVV (135 aa). Position 588–593 (588–593) interacts with ATP; the sequence is DLGGTN. Residues 659-660, 676-677, and 712-713 each bind D-glucose; these read SF, TK, and ND. Residues 712–951 form a hexokinase large subdomain 2 region; it reads NDTVGTMMTC…CTVSFLLSED (240 aa). D-glucose 6-phosphate is bound by residues D713 and T736. An ATP-binding site is contributed by T736. D-glucose contacts are provided by residues 738-739, E764, and E798; that span reads SN. ATP contacts are provided by residues 803–804, 840–844, and 919–923; these read GM, TKFLS, and TLYKL. D-glucose 6-phosphate-binding positions include 917–919 and S953; that span reads DGT.

Belongs to the hexokinase family. In terms of assembly, monomer. Interacts with RABL2/RABL2A; binds preferentially to GTP-bound RABL2. Interacts with VDAC1. The HK1-VDAC1 complex interacts with ATF2. Interacts (via N-terminal spermatogenic cell-specific region) with PFKM isoform 2 and isoform 3 (via C-terminus). Interacts with SMAD5. In terms of processing, tyrosine-phosphorylated. In rapidly growing tumor cells exhibiting high glucose catabolic rates, isoform HK1 is markedly elevated. Isoform HK1-SA, isoform HK1-SB and isoform HK1-SC are found only in spermatogenic cells. Isoform HK1-SC is detected in round spermatids, condensing spermatids and mature sperm where it is found in the head membranes, mitochondria of the midpiece and the fibrous sheath of the flagellum. Expressed within the principal piece and midpiece of sperm tail (at protein level).

It is found in the mitochondrion outer membrane. Its subcellular location is the cytoplasm. The protein localises to the cytosol. It localises to the membrane. It catalyses the reaction a D-hexose + ATP = a D-hexose 6-phosphate + ADP + H(+). It carries out the reaction D-fructose + ATP = D-fructose 6-phosphate + ADP + H(+). The catalysed reaction is D-glucose + ATP = D-glucose 6-phosphate + ADP + H(+). The enzyme catalyses D-mannose + ATP = D-mannose 6-phosphate + ADP + H(+). It catalyses the reaction D-glucosamine + ATP = D-glucosamine 6-phosphate + ADP + H(+). Its pathway is carbohydrate metabolism; hexose metabolism. It functions in the pathway carbohydrate degradation; glycolysis; D-glyceraldehyde 3-phosphate and glycerone phosphate from D-glucose: step 1/4. Hexokinase is an allosteric enzyme inhibited by its product D-glucose 6-phosphate. Hexokinase activity is inhibited by N-acetyl-D-glucosamine. In terms of biological role, catalyzes the phosphorylation of various hexoses, such as D-glucose, D-glucosamine, D-fructose, D-mannose and 2-deoxy-D-glucose, to hexose 6-phosphate (D-glucose 6-phosphate, D-glucosamine 6-phosphate, D-fructose 6-phosphate, D-mannose 6-phosphate and 2-deoxy-D-glucose 6-phosphate, respectively). Does not phosphorylate N-acetyl-D-glucosamine. Mediates the initial step of glycolysis by catalyzing phosphorylation of D-glucose to D-glucose 6-phosphate. Involved in innate immunity and inflammation by acting as a pattern recognition receptor for bacterial peptidoglycan. When released in the cytosol, N-acetyl-D-glucosamine component of bacterial peptidoglycan inhibits the hexokinase activity of HK1 and causes its dissociation from mitochondrial outer membrane, thereby activating the NLRP3 inflammasome. The sequence is that of Hexokinase-1 from Mus musculus (Mouse).